A 70-amino-acid polypeptide reads, in one-letter code: DNA gyrase inhibitor YacG (70 aa).

Over residues 1 to 15 (MPEDKKAAAKVEPLR) the composition is skewed to basic and acidic residues. Residues 1-22 (MPEDKKAAAKVEPLRKTRPCPE) form a disordered region. 4 residues coordinate Zn(2+): Cys20, Cys23, Cys35, and Cys39.

Belongs to the DNA gyrase inhibitor YacG family. In terms of assembly, interacts with GyrB. Requires Zn(2+) as cofactor.

In terms of biological role, inhibits all the catalytic activities of DNA gyrase by preventing its interaction with DNA. Acts by binding directly to the C-terminal domain of GyrB, which probably disrupts DNA binding by the gyrase. The sequence is that of DNA gyrase inhibitor YacG from Rhizobium johnstonii (strain DSM 114642 / LMG 32736 / 3841) (Rhizobium leguminosarum bv. viciae).